The chain runs to 1137 residues: 2'-5'-oligoadenylate synthase 3 (1137 aa).

Residue Met1 is modified to N-acetylmethionine. Residues 6–341 (TPAGALDKLV…GALVQPWEGP (336 aa)) form an OAS domain 1 region. Interaction with dsRNA stretches follow at residues 12–56 (DKLV…VIRI) and 185–199 (ELRKNFVNIRPVKLK). The linker stretch occupies residues 342–461 (GLPCAGILDL…GSQMGPDLSQ (120 aa)). Over residues 434–453 (QSTASSNTPPGHSSMSTAGS) the composition is skewed to polar residues. A disordered region spans residues 434-462 (QSTASSNTPPGHSSMSTAGSQMGPDLSQI). OAS domain regions lie at residues 462–792 (IPSK…PWDV) and 800–1134 (TPAQ…WPVK). Ser854 lines the ATP pocket. Asp866, Asp868, and Asp938 together coordinate Mg(2+). ATP contacts are provided by Arg997, Lys1000, and Gln1019.

Belongs to the 2-5A synthase family. As to quaternary structure, monomer. Mg(2+) is required as a cofactor.

Its subcellular location is the cytoplasm. It localises to the nucleus. The enzyme catalyses 3 ATP = 5'-triphosphoadenylyl-(2'-&gt;5')-adenylyl-(2'-&gt;5')-adenosine + 2 diphosphate. With respect to regulation, produced as a latent enzyme which is activated by dsRNA generated during the course of viral infection. Strongly activated by long dsRNAs at least 50 nucleotides in length. ssRNA does not activate the enzyme. Interferon-induced, dsRNA-activated antiviral enzyme which plays a critical role in cellular innate antiviral response. In addition, it may also play a role in other cellular processes such as apoptosis, cell growth, differentiation and gene regulation. Synthesizes preferentially dimers of 2'-5'-oligoadenylates (2-5A) from ATP which then bind to the inactive monomeric form of ribonuclease L (RNase L) leading to its dimerization and subsequent activation. Activation of RNase L leads to degradation of cellular as well as viral RNA, resulting in the inhibition of protein synthesis, thus terminating viral replication. Can mediate the antiviral effect via the classical RNase L-dependent pathway or an alternative antiviral pathway independent of RNase L. This Rattus norvegicus (Rat) protein is 2'-5'-oligoadenylate synthase 3 (Oas3).